The following is an 898-amino-acid chain: Putative disease resistance protein At1g63350 (898 aa).

The stretch at 24-88 (VSYTHNLEKN…IESRVNDLLN (65 aa)) forms a coiled coil. One can recognise an NB-ARC domain in the interval 137 to 440 (DQASTSEVEE…CEEIIDGSEG (304 aa)). ATP is bound at residue 179–186 (GMGGVGKT). 6 LRR repeats span residues 516-537 (VVRR…LDCM), 538-559 (ELTT…FFNS), 562-584 (KLAV…ISEL), 586-608 (SLQY…QELK), 609-631 (KLIH…SCLH), and 632-654 (NLKV…KELE).

This sequence belongs to the disease resistance NB-LRR family.

In terms of biological role, potential disease resistance protein. This Arabidopsis thaliana (Mouse-ear cress) protein is Putative disease resistance protein At1g63350.